The primary structure comprises 305 residues: UDP-3-O-acyl-N-acetylglucosamine deacetylase (305 aa).

Histidine 78, histidine 237, and aspartate 241 together coordinate Zn(2+). Catalysis depends on histidine 264, which acts as the Proton donor.

This sequence belongs to the LpxC family. Zn(2+) serves as cofactor.

It carries out the reaction a UDP-3-O-[(3R)-3-hydroxyacyl]-N-acetyl-alpha-D-glucosamine + H2O = a UDP-3-O-[(3R)-3-hydroxyacyl]-alpha-D-glucosamine + acetate. It functions in the pathway glycolipid biosynthesis; lipid IV(A) biosynthesis; lipid IV(A) from (3R)-3-hydroxytetradecanoyl-[acyl-carrier-protein] and UDP-N-acetyl-alpha-D-glucosamine: step 2/6. Functionally, catalyzes the hydrolysis of UDP-3-O-myristoyl-N-acetylglucosamine to form UDP-3-O-myristoylglucosamine and acetate, the committed step in lipid A biosynthesis. In Cupriavidus metallidurans (strain ATCC 43123 / DSM 2839 / NBRC 102507 / CH34) (Ralstonia metallidurans), this protein is UDP-3-O-acyl-N-acetylglucosamine deacetylase.